The following is a 116-amino-acid chain: MADRAHRLKKRAEFLKVASRGRKVPSPGLVLQALGRDDSDPARIGFTVTKKVGNAVVRNRTRRRLREAVRVVEREEPLNGVDLVLIGRDGTRGRTFAALVGDLRRTLRKAGVRGAE.

The protein belongs to the RnpA family. As to quaternary structure, consists of a catalytic RNA component (M1 or rnpB) and a protein subunit.

It carries out the reaction Endonucleolytic cleavage of RNA, removing 5'-extranucleotides from tRNA precursor.. RNaseP catalyzes the removal of the 5'-leader sequence from pre-tRNA to produce the mature 5'-terminus. It can also cleave other RNA substrates such as 4.5S RNA. The protein component plays an auxiliary but essential role in vivo by binding to the 5'-leader sequence and broadening the substrate specificity of the ribozyme. The protein is Ribonuclease P protein component of Gluconacetobacter diazotrophicus (strain ATCC 49037 / DSM 5601 / CCUG 37298 / CIP 103539 / LMG 7603 / PAl5).